Reading from the N-terminus, the 209-residue chain is Yop proteins translocation protein K (209 aa).

Its function is as follows. Belongs to an operon involved in the translocation of Yop proteins across the bacterial membranes or in the specific control of this function. The sequence is that of Yop proteins translocation protein K (yscK) from Yersinia enterocolitica.